The sequence spans 308 residues: Ribonuclease Z (308 aa).

7 residues coordinate Zn(2+): His-60, His-62, Asp-64, His-65, His-140, Asp-209, and His-269. Residue Asp-64 is the Proton acceptor of the active site.

It belongs to the RNase Z family. Homodimer. The cofactor is Zn(2+).

It catalyses the reaction Endonucleolytic cleavage of RNA, removing extra 3' nucleotides from tRNA precursor, generating 3' termini of tRNAs. A 3'-hydroxy group is left at the tRNA terminus and a 5'-phosphoryl group is left at the trailer molecule.. Functionally, zinc phosphodiesterase, which displays some tRNA 3'-processing endonuclease activity. Probably involved in tRNA maturation, by removing a 3'-trailer from precursor tRNA. This chain is Ribonuclease Z, found in Methanococcus maripaludis (strain C6 / ATCC BAA-1332).